The sequence spans 506 residues: 5-OH-xanthotoxin synthase (506 aa).

A helical transmembrane segment spans residues 3–23 (PVVIFLVLAFPIASVYLLFYH). The tract at residues 365–370 (TGPLLI) is substrate specificity. Residue Cys446 participates in heme binding.

Belongs to the cytochrome P450 family. Heme serves as cofactor.

The protein localises to the microsome membrane. The catalysed reaction is xanthotoxin + reduced [NADPH--hemoprotein reductase] + O2 = 5-hydroxyxanthotoxin + oxidized [NADPH--hemoprotein reductase] + H2O + 2 H(+). The protein operates within secondary metabolite biosynthesis. Involved in the biosynthesis of coumarins and furanocoumarins (FCs), natural products required for defense responses against attacks by predators with potential medical and agroindustrial usages such as anticoagulant, rodenticide and artificial vanilla substitutes. Catalyzes the conversion of xanthotoxin into 5-hydroxyxanthotoxin. The polypeptide is 5-OH-xanthotoxin synthase (Pastinaca sativa (Wild parsnip)).